Here is a 943-residue protein sequence, read N- to C-terminus: Nuclear factor of activated T-cells, cytoplasmic 1 (943 aa).

A disordered region spans residues 22-48 (GRGETLGPAPRAGGTMKSAEEEHYGYA). Residues 118 to 123 (PRIEIT) are calcineurin-binding. The transactivation domain A (TAD-A) stretch occupies residues 126–218 (LGLYHNNNQF…CVSPKTTDPE (93 aa)). Residues 200–298 (PQTSPWQSPC…GSPRVSVTDD (99 aa)) form a disordered region. Residues 201 to 214 (QTSPWQSPCVSPKT) show a composition bias toward polar residues. Repeat copies occupy residues 203–219 (SPWQ…DPEE) and 233–249 (SPRH…VTEE). The interval 203-298 (SPWQSPCVSP…GSPRVSVTDD (96 aa)) is 3 X SP repeats. S233 and S237 each carry phosphoserine. Polar residues predominate over residues 236–248 (HSPSTSPRASVTE). Position 245 is a phosphoserine; by PKA (S245). The Nuclear localization signal motif lies at 265-267 (KRK). S269 is subject to Phosphoserine; by PKA. A compositionally biased stretch (pro residues) spans 276-288 (PYSPHHSPTPSPH). Repeat unit 3 spans residues 282-298 (SPTPSPHGSPRVSVTDD). A Phosphoserine; by PKA modification is found at S294. The short motif at 310–321 (SAIVAAINALTT) is the Nuclear export signal element. The 183-residue stretch at 410-592 (PTLPALDWQL…NPIECSQRSA (183 aa)) folds into the RHD domain. A DNA-binding region spans residues 439-446 (RAHYETEG). A Nuclear localization signal motif is present at residues 682 to 684 (KRK). The interval 703 to 943 (TEPTDDYEPA…NDLSSTSTHS (241 aa)) is transactivation domain B (TAD-B). A disordered region spans residues 787–912 (HLGLPQPAGE…SPNLAPIPVT (126 aa)). A compositionally biased stretch (pro residues) spans 846–855 (SPSPPLPPAT). The Nuclear export signal signature appears at 924 to 933 (YLDDVNEIIR).

Member of the multicomponent NFATC transcription complex that consists of at least two components, a pre-existing cytoplasmic component NFATC2 and an inducible nuclear component NFATC1. Other members such as NFATC4, NFATC3 or members of the activating protein-1 family, MAF, GATA4 and Cbp/p300 can also bind the complex. NFATC proteins bind to DNA as monomers. Interacts with HOMER2 and HOMER3; this interaction may compete with calcineurin/PPP3CA-binding and hence prevent NFATC1 dephosphorylation and activation. Interacts with TLE6/GRG6. In terms of processing, phosphorylated by NFATC-kinase and GSK3B; phosphorylation induces NFATC1 nuclear exit and dephosphorylation by calcineurin promotes nuclear import. Phosphorylation by PKA and DYRK2 negatively modulates nuclear accumulation, and promotes subsequent phosphorylation by GSK3B or casein kinase 1. Expressed in thymus, peripheral leukocytes as T-cells and spleen. Isoforms A are preferentially expressed in effector T-cells (thymus and peripheral leukocytes) whereas isoforms B and isoforms C are preferentially expressed in naive T-cells (spleen). Isoforms B are expressed in naive T-cells after first antigen exposure and isoforms A are expressed in effector T-cells after second antigen exposure. Isoforms IA are widely expressed but not detected in liver nor pancreas, neural expression is strongest in corpus callosum. Isoforms IB are expressed mostly in muscle, cerebellum, placenta and thymus, neural expression in fetal and adult brain, strongest in corpus callosum.

Its subcellular location is the cytoplasm. It is found in the nucleus. Plays a role in the inducible expression of cytokine genes in T-cells, especially in the induction of the IL-2 or IL-4 gene transcription. Also controls gene expression in embryonic cardiac cells. Could regulate not only the activation and proliferation but also the differentiation and programmed death of T-lymphocytes as well as lymphoid and non-lymphoid cells. Required for osteoclastogenesis and regulates many genes important for osteoclast differentiation and function. The polypeptide is Nuclear factor of activated T-cells, cytoplasmic 1 (NFATC1) (Homo sapiens (Human)).